A 504-amino-acid polypeptide reads, in one-letter code: DnaJ homolog subfamily C member 3 (504 aa).

The signal sequence occupies residues 1–31; the sequence is MVAPGSVTSRLGSVFPFLLVLVDLQYEGAEC. 9 TPR repeats span residues 37 to 70, 72 to 104, 105 to 138, 154 to 187, 189 to 221, 222 to 255, 268 to 301, 306 to 339, and 340 to 373; these read VEKH…DPDN, IAYY…KMDF, TAAR…NPSE, MQRL…CVWD, ELRE…KNDN, TEAF…DQDH, LNKL…EPGV, IRSK…EPDN, and VNAL…NEND. Cysteines 248 and 258 form a disulfide. At Ser274 the chain carries Phosphoserine. Cysteines 313 and 329 form a disulfide. Positions 375 to 393 are flexible linker; that stretch reads QIREGLEKAQRLLKQSQRR. The region spanning 394–462 is the J domain; the sequence is DYYKILGVKR…EMRKKFDDGE (69 aa). The segment at 451–481 is disordered; the sequence is DPEMRKKFDDGEDPLDAESQQGGGGNPFHRS.

As to quaternary structure, interacts with EIF2AK4/GCN2; this interaction occurs under endoplasmic reticulum (ER) stress, hypothermic and amino acid starving stress conditions and inhibits EIF2AK4/GCN2 kinase activity. Interacts with EIF2AK3. Interacts with EIF2AK2. Forms a trimeric complex with DNAJB1 and HSPA8. Interacts with THAP12.

The protein localises to the endoplasmic reticulum. Its function is as follows. Involved in the unfolded protein response (UPR) during endoplasmic reticulum (ER) stress. Acts as a negative regulator of the EIF2AK4/GCN2 kinase activity by preventing the phosphorylation of eIF-2-alpha at 'Ser-52' and hence attenuating general protein synthesis under ER stress, hypothermic and amino acid starving stress conditions. Co-chaperone of HSPA8/HSC70, it stimulates its ATPase activity. May inhibit both the autophosphorylation of EIF2AK2/PKR and the ability of EIF2AK2 to catalyze phosphorylation of the EIF2A. May inhibit EIF2AK3/PERK activity. The chain is DnaJ homolog subfamily C member 3 (DNAJC3) from Bos taurus (Bovine).